An 82-amino-acid chain; its full sequence is Host transcription reprogramming factor 10 (82 aa).

Positions 1-19 (MQIFNMVSLVALFALGATA) are cleaved as a signal peptide. The segment at 57–81 (WVCHACNKQFTTPAALQKHKDTVVH) adopts a C2H2-type zinc-finger fold.

It localises to the secreted. It is found in the host nucleus. Its function is as follows. Probable secreted effector that translocates into the nuclei of host cells to reprogram the expression of targeted genes by binding on effector binding elements in rice. In Pyricularia oryzae (strain 70-15 / ATCC MYA-4617 / FGSC 8958) (Rice blast fungus), this protein is Host transcription reprogramming factor 10.